The chain runs to 326 residues: ELMO domain-containing protein 1 (326 aa).

An ELMO domain is found at 133-306 (QHEEMLLKLW…KFRKRIIKQL (174 aa)).

In terms of biological role, acts as a GTPase-activating protein (GAP) toward guanine nucleotide exchange factors like ARL2, ARL3, ARF1 and ARF6, but not for GTPases outside the Arf family. This Pongo abelii (Sumatran orangutan) protein is ELMO domain-containing protein 1 (ELMOD1).